A 206-amino-acid polypeptide reads, in one-letter code: MKVDVIKLDGKKAGSVDLDEALFGLEPRADILHRVVRWQRNNAQAGTHKVKTRREVSYSTKKIYRQKGTGGARHGARSAPIFRGGGVYKGPTPRSHGHELTKKFRKLGLRHALSAKAAEGRLVVIESIAMDEAKTSALAKQVKEMGWKRALIIDGSDVDANFAQAARNIEGLDVLPTMGANVYDILKRDTLVITKAGVEALEARLK.

This sequence belongs to the universal ribosomal protein uL4 family. In terms of assembly, part of the 50S ribosomal subunit.

Its function is as follows. One of the primary rRNA binding proteins, this protein initially binds near the 5'-end of the 23S rRNA. It is important during the early stages of 50S assembly. It makes multiple contacts with different domains of the 23S rRNA in the assembled 50S subunit and ribosome. Forms part of the polypeptide exit tunnel. The chain is Large ribosomal subunit protein uL4 from Jannaschia sp. (strain CCS1).